The following is a 342-amino-acid chain: uncharacterized protein (342 aa).

Cys41, His63, Cys94, Cys97, Cys100, Cys108, and Glu149 together coordinate Zn(2+).

This sequence belongs to the zinc-containing alcohol dehydrogenase family. Requires Zn(2+) as cofactor.

This is an uncharacterized protein from Haemophilus influenzae (strain ATCC 51907 / DSM 11121 / KW20 / Rd).